Consider the following 569-residue polypeptide: MKQSKLFIPTLKEVPNSAEAKSHRMMLRAGYIHQVSAGVYSYLPLAYRVLENIQAIIKDEMSKIDAVQMQMPGILPAELWEESGRYATYGPNLFKFKDRHSRDFILGPTHEETFADLVRNNIKSYKKLPLTLYQIQTKYRDEDRPRYGLLRGREFIMQDAYSFSANEADLDTTFQQMRQAYTNIFERCGLDFRAIVGDAGAMGGKDSMEFSAIAEIGEDTIVYSDQSDYAANLEMATGVRPGQSSTDVQLEMEKVATGDAHSIEEVAARLEVPAQKIIKSVLFIADEKPVLVLVRGDYEVNDVKLKNFLDADFLDLATAEQVQATMNAPMGSIGPVNAPEDVQIVADYSVEALVNAVVGANEADHHFLNVNSKRDFNVADYADLRFVQEGETAPDGEGKLQFTKGIEIGHIFKLGTRYTEQFGATFLDENGRAKPIIMGSYGIGVSRLLSAITEQQADENGLVWPSAIAPYDLHVVPVNVKDDAQVELAEQIEGLLEEAGYSVLVDDRKERAGVKFADSDLIGLPIRITVGKKAAEEIVEVKLRKTGETLEVKKDELINSLSILLASEK.

Belongs to the class-II aminoacyl-tRNA synthetase family. ProS type 1 subfamily. Homodimer.

It localises to the cytoplasm. It catalyses the reaction tRNA(Pro) + L-proline + ATP = L-prolyl-tRNA(Pro) + AMP + diphosphate. Functionally, catalyzes the attachment of proline to tRNA(Pro) in a two-step reaction: proline is first activated by ATP to form Pro-AMP and then transferred to the acceptor end of tRNA(Pro). As ProRS can inadvertently accommodate and process non-cognate amino acids such as alanine and cysteine, to avoid such errors it has two additional distinct editing activities against alanine. One activity is designated as 'pretransfer' editing and involves the tRNA(Pro)-independent hydrolysis of activated Ala-AMP. The other activity is designated 'posttransfer' editing and involves deacylation of mischarged Ala-tRNA(Pro). The misacylated Cys-tRNA(Pro) is not edited by ProRS. The chain is Proline--tRNA ligase from Latilactobacillus sakei subsp. sakei (strain 23K) (Lactobacillus sakei subsp. sakei).